Here is a 230-residue protein sequence, read N- to C-terminus: Transmembrane protein 225 (230 aa).

At 1-8 (MMHIPNRS) the chain is on the cytoplasmic side. Residues 9–29 (IQAANIFFSSGAILLLIVGLI) traverse the membrane as a helical segment. Residues 30–71 (MEDWVELIPKVRKDKTTHSPWLGCCPPFWPEESLEVVRRIMR) are Extracellular-facing. The chain crosses the membrane as a helical span at residues 72 to 92 (MTLNISIYLNLIIGLQFSYMI). The Cytoplasmic portion of the chain corresponds to 93-99 (SQNKCVH). The helical transmembrane segment at 100–120 (LLVGFLSFFAGCLLFYAIIVY) threads the bilayer. Residues 121-139 (HHKLNKGQYVYFVNYKTKW) are Extracellular-facing. A helical transmembrane segment spans residues 140-160 (IAFTVYLTIALFLTCGIFCFI). At 161–230 (QSTNRCECMK…TQARRVTWAL (70 aa)) the chain is on the cytoplasmic side. Residues 224–228 (RRVTW) carry the RVxF motif.

Interacts (via RVxF motif) with PPP1CC. In terms of tissue distribution, expressed in testis, epididymis and spermatozoa (at protein level). Not expressed in brain, heart, lung, liver, spleen, kidney and skeletal muscle.

It is found in the cytoplasmic vesicle. Its subcellular location is the secretory vesicle. It localises to the acrosome membrane. Functionally, probably inhibits protein phosphatase 1 (PP1) in sperm via binding to catalytic subunit PPP1CC. The sequence is that of Transmembrane protein 225 (Tmem225) from Mus musculus (Mouse).